Reading from the N-terminus, the 430-residue chain is Pre-B-cell leukemia transcription factor 2 (430 aa).

Residues 1–52 form a disordered region; that stretch reads MDERLLGPPPPGGGRGGLGLVSGEPGGPGEPPGGGDPGGGSGGVPGGRGKQD. Positions 13–48 are enriched in gly residues; sequence GGRGGLGLVSGEPGGPGEPPGGGDPGGGSGGVPGGR. In terms of domain architecture, PBC spans 48–243; it reads RGKQDIGDIL…VMILRSRFLD (196 aa). The interval 55–134 is PBC-A; sequence DILQQIMTIT…EGVAGPEKGG (80 aa). A phosphoserine mark is found at S136, S151, and S159. The PBC-B stretch occupies residues 137-243; that stretch reads AAAAAAAAAS…VMILRSRFLD (107 aa). The segment at residues 244-306 is a DNA-binding region (homeobox; TALE-type); the sequence is ARRKRRNFSK…NKRIRYKKNI (63 aa). Disordered stretches follow at residues 326-347 and 378-430; these read QGGHSRTSSPTPPSSAGSGGSF and SMGP…DTSN. S330 is modified (phosphoserine). Residues 380-392 are compositionally biased toward gly residues; the sequence is GPGGYGDNLGGGQ. S395 is subject to Phosphoserine. Over residues 403-418 the composition is skewed to polar residues; that stretch reads GSWQEAVTPSSVTSPT.

This sequence belongs to the TALE/PBX homeobox family. In terms of assembly, forms heterodimers with MEIS1 and heterotrimers with MEIS1 and HOXA9. Interacts with PBXIP1. As to expression, ubiquitously expressed.

It localises to the nucleus. Transcriptional activator that binds the sequence 5'-ATCAATCAA-3'. Activates transcription of PF4 in complex with MEIS1. The polypeptide is Pre-B-cell leukemia transcription factor 2 (PBX2) (Homo sapiens (Human)).